Consider the following 408-residue polypeptide: 4-hydroxy-3-methylbut-2-en-1-yl diphosphate synthase (ferredoxin) (408 aa).

The span at 1-21 (MQTLPTPTTSSNTANQSTFDT) shows a compositional bias: polar residues. Residues 1-26 (MQTLPTPTTSSNTANQSTFDTTIKRR) are disordered. Residues Cys-317, Cys-320, Cys-351, and Glu-358 each coordinate [4Fe-4S] cluster.

It belongs to the IspG family. It depends on [4Fe-4S] cluster as a cofactor.

The catalysed reaction is (2E)-4-hydroxy-3-methylbut-2-enyl diphosphate + 2 oxidized [2Fe-2S]-[ferredoxin] + H2O = 2-C-methyl-D-erythritol 2,4-cyclic diphosphate + 2 reduced [2Fe-2S]-[ferredoxin] + H(+). It participates in isoprenoid biosynthesis; isopentenyl diphosphate biosynthesis via DXP pathway; isopentenyl diphosphate from 1-deoxy-D-xylulose 5-phosphate: step 5/6. In terms of biological role, converts 2C-methyl-D-erythritol 2,4-cyclodiphosphate (ME-2,4cPP) into 1-hydroxy-2-methyl-2-(E)-butenyl 4-diphosphate. In Trichormus variabilis (strain ATCC 29413 / PCC 7937) (Anabaena variabilis), this protein is 4-hydroxy-3-methylbut-2-en-1-yl diphosphate synthase (ferredoxin).